The primary structure comprises 655 residues: Large subunit GTPase 1 homolog (655 aa).

The segment at 1–31 is disordered; sequence MGRRRAPGGGSLGRVLIRHQTQRSRSHRHTD. Over residues 16-28 the composition is skewed to basic residues; sequence LIRHQTQRSRSHR. 2 positions are modified to phosphoserine: Ser93 and Ser97. One can recognise a CP-type G domain in the interval 164–441; that stretch reads WRQLWRVIER…LCDCPGLVMP (278 aa). 212–215 contributes to the GTP binding site; the sequence is NKAD. At Ser252 the chain carries Phosphoserine. The segment at 253–359 is disordered; it reads KDEVNSVAGE…ENSQMSNKSH (107 aa). The segment covering 288-327 has biased composition (acidic residues); that stretch reads EESESDDDDSEYEDCQEDEEEDWQTCSEEDSNPEEGQEEG. Over residues 328–339 the composition is skewed to basic and acidic residues; the sequence is GCDRDQKEHGPE. Residues 344 to 359 are compositionally biased toward polar residues; that stretch reads QSRASPENSQMSNKSH. GTP contacts are provided by residues 390-397 and 434-437; these read GYPNVGKS and DCPG. The segment at 625–655 is disordered; it reads SAENVPGKPWKKHGNRNKKEKSRRLYRHLDV. A compositionally biased stretch (basic residues) spans 633-655; it reads PWKKHGNRNKKEKSRRLYRHLDV.

Belongs to the TRAFAC class YlqF/YawG GTPase family. LSG1 subfamily.

The protein localises to the cytoplasm. It is found in the endoplasmic reticulum. Its subcellular location is the nucleus. The protein resides in the cajal body. The catalysed reaction is GTP + H2O = GDP + phosphate + H(+). Functions as a GTPase. May act by mediating the release of NMD3 from the 60S ribosomal subunit after export into the cytoplasm during the 60S ribosomal subunit maturation. This is Large subunit GTPase 1 homolog from Rattus norvegicus (Rat).